The primary structure comprises 338 residues: L-serine dehydratase (338 aa).

Residue Lys-39 is modified to N6-(pyridoxal phosphate)lysine.

It belongs to the serine/threonine dehydratase family. It depends on pyridoxal 5'-phosphate as a cofactor.

It is found in the cytoplasm. It catalyses the reaction L-serine = pyruvate + NH4(+). It functions in the pathway carbohydrate biosynthesis; gluconeogenesis. This Saccharomyces cerevisiae (strain YJM789) (Baker's yeast) protein is L-serine dehydratase (SDL1).